The chain runs to 435 residues: GTPase Der (435 aa).

2 EngA-type G domains span residues 4-167 (KIVA…SKND) and 175-350 (TKIA…QSLS). Residues 10 to 17 (GKPNVGKS), 57 to 61 (DTGGI), 119 to 122 (NKYD), 181 to 188 (GKPNVGKS), 228 to 232 (DTAGI), and 293 to 296 (NKWD) each bind GTP. The 85-residue stretch at 351 to 435 (VKVKTYVLNE…PINLIFRERK (85 aa)) folds into the KH-like domain.

This sequence belongs to the TRAFAC class TrmE-Era-EngA-EngB-Septin-like GTPase superfamily. EngA (Der) GTPase family. In terms of assembly, associates with the 50S ribosomal subunit.

Functionally, GTPase that plays an essential role in the late steps of ribosome biogenesis. The protein is GTPase Der of Mycoplasma capricolum subsp. capricolum (strain California kid / ATCC 27343 / NCTC 10154).